The sequence spans 540 residues: Probable LRR receptor-like serine/threonine-protein kinase RPK1 (540 aa).

The N-terminal stretch at 1-19 (MKLLGLVFLLFNLFMFSFS) is a signal peptide. Topologically, residues 20-198 (RKLLTESGGG…PGKSGLYPIE (179 aa)) are extracellular. 2 LRR repeats span residues 118 to 142 (LSEI…IWGL) and 144 to 169 (KLEI…VLRK). A helical membrane pass occupies residues 199–219 (IASIVSASVIVFVLLVLVILF). Topologically, residues 220-540 (IYTRKWKRNS…LLKRIQPSRL (321 aa)) are cytoplasmic. 2 positions are modified to phosphothreonine: T250 and T258. Residues 261-535 (FSNSNCIGHG…KQAVRLLKRI (275 aa)) form the Protein kinase domain. Residues 267–275 (IGHGGFGST) and K289 each bind ATP. Y334 and Y372 each carry phosphotyrosine. The active-site Proton acceptor is D385. Y427 bears the Phosphotyrosine mark. T435 is subject to Phosphothreonine.

This sequence belongs to the protein kinase superfamily. Ser/Thr protein kinase family. Expressed in roots, stems, leaves, and flowers.

Its subcellular location is the cell membrane. It catalyses the reaction L-seryl-[protein] + ATP = O-phospho-L-seryl-[protein] + ADP + H(+). It carries out the reaction L-threonyl-[protein] + ATP = O-phospho-L-threonyl-[protein] + ADP + H(+). Its function is as follows. Involved in the main abscisic acid-mediated (ABA) signaling pathway and in early ABA perception. Together with RPK2, required for pattern formation along the radial axis (e.g. the apical embryonic domain cell types that generate cotyledon primordia), and the apical-basal axis (e.g. differentiation of the basal pole during early embryogenesis). This Arabidopsis thaliana (Mouse-ear cress) protein is Probable LRR receptor-like serine/threonine-protein kinase RPK1 (RPK1).